We begin with the raw amino-acid sequence, 86 residues long: Small ribosomal subunit protein uS17 (86 aa).

The protein belongs to the universal ribosomal protein uS17 family. As to quaternary structure, part of the 30S ribosomal subunit.

Functionally, one of the primary rRNA binding proteins, it binds specifically to the 5'-end of 16S ribosomal RNA. The polypeptide is Small ribosomal subunit protein uS17 (Rhizorhabdus wittichii (strain DSM 6014 / CCUG 31198 / JCM 15750 / NBRC 105917 / EY 4224 / RW1) (Sphingomonas wittichii)).